The sequence spans 415 residues: Squalene synthase 10 (415 aa).

2 consecutive transmembrane segments (helical) span residues 281–301 (AIFR…ALCF) and 392–412 (LIVI…SNLP).

The protein belongs to the phytoene/squalene synthase family. Requires Mg(2+) as cofactor. The cofactor is Mn(2+).

The protein localises to the endoplasmic reticulum membrane. The enzyme catalyses 2 (2E,6E)-farnesyl diphosphate + NADH + H(+) = squalene + 2 diphosphate + NAD(+). The catalysed reaction is 2 (2E,6E)-farnesyl diphosphate + NADPH + H(+) = squalene + 2 diphosphate + NADP(+). The protein operates within terpene metabolism; lanosterol biosynthesis; lanosterol from farnesyl diphosphate: step 1/3. Component of the triterpene saponins (e.g. ginsenosides or panaxosides) and phytosterols biosynthetic pathways. Catalyzes the biosynthesis of squalene. The sequence is that of Squalene synthase 10 from Panax ginseng (Korean ginseng).